A 251-amino-acid chain; its full sequence is 2,3-bisphosphoglycerate-dependent phosphoglycerate mutase (251 aa).

Substrate-binding positions include 13–20 (RHGESEWN), 26–27 (TG), arginine 65, 92–95 (ERHY), lysine 103, 119–120 (RR), and 186–187 (GN). Residue histidine 14 is the Tele-phosphohistidine intermediate of the active site. Catalysis depends on glutamate 92, which acts as the Proton donor/acceptor.

It belongs to the phosphoglycerate mutase family. BPG-dependent PGAM subfamily.

The catalysed reaction is (2R)-2-phosphoglycerate = (2R)-3-phosphoglycerate. Its pathway is carbohydrate degradation; glycolysis; pyruvate from D-glyceraldehyde 3-phosphate: step 3/5. Its function is as follows. Catalyzes the interconversion of 2-phosphoglycerate and 3-phosphoglycerate. The polypeptide is 2,3-bisphosphoglycerate-dependent phosphoglycerate mutase (Rhodococcus jostii (strain RHA1)).